The following is a 178-amino-acid chain: Major non-capsid protein (178 aa).

Belongs to the tenuiviruses NCP family.

Its subcellular location is the host cytoplasm. Its function is as follows. Induces the formation of large intracellular inclusion body, organized in amorphous and crystalline arrays. Presumably the main cause of the stripe disease observed in host. This chain is Major non-capsid protein, found in Rice stripe virus (isolate T) (RSV).